The primary structure comprises 382 residues: Proton extrusion protein PxcA (382 aa).

The next 4 membrane-spanning stretches (helical) occupy residues 156-176 (TLIS…VQQV), 257-277 (AVKN…VCVF), 305-325 (IILF…TVLL), and 340-360 (FILL…KYWI).

The protein belongs to the CemA family.

Its subcellular location is the cell inner membrane. Its function is as follows. Required for H(+) efflux immediately after light irradiation to form a rapid H(+) concentration gradient across the thylakoid membranes. Together with PxcL, contributes to transient H(+) uptake following dark to light transition. This Synechococcus sp. (strain WH7803) protein is Proton extrusion protein PxcA.